The following is a 437-amino-acid chain: MNAYQNKNITIIGLGKTGLSCVDYLLSQQANIRVIDTRKNPTGIDKLPQNIPLHTGSLNQEWLLESDMIVISPGLAVKTPEIQTALKAGVEVIGDIELFCRAATKPIVGITGSNGKSTVTTLVYEMAKAAGVKVGMGGNIGIPALSLLNEDCELYVLELSSFQLETTYSLKAAAATVLNVTEDHMDRYMDLEDYRQAKLRIYHNAKVGVLNNEDRLTFGENENQAKHTVSFAENSADYWLKTENGKQYLMVKDEVILPCEEATLVGRHNYMNILAATALAQAIGINLDSIRTALRHFKGLDHRFQLVHQANGIRWINDSKATNVGSTVAALAGLYIEGKLHLLLGGDGKGADFSELAELINQPHIICYCFGRDGALLAKFSSQSYLFDTMEQAIEFLRPTLQSGDMVLLSPACASLDQFASFEKRGEEFTHLAQCLT.

Residue 112–118 participates in ATP binding; sequence GSNGKST.

The protein belongs to the MurCDEF family.

It is found in the cytoplasm. It catalyses the reaction UDP-N-acetyl-alpha-D-muramoyl-L-alanine + D-glutamate + ATP = UDP-N-acetyl-alpha-D-muramoyl-L-alanyl-D-glutamate + ADP + phosphate + H(+). It functions in the pathway cell wall biogenesis; peptidoglycan biosynthesis. In terms of biological role, cell wall formation. Catalyzes the addition of glutamate to the nucleotide precursor UDP-N-acetylmuramoyl-L-alanine (UMA). In Haemophilus influenzae (strain ATCC 51907 / DSM 11121 / KW20 / Rd), this protein is UDP-N-acetylmuramoylalanine--D-glutamate ligase (murD).